Here is a 459-residue protein sequence, read N- to C-terminus: Putrescine aminotransferase (459 aa).

Pyridoxal 5'-phosphate is bound by residues 150 to 151 (GT) and glutamine 274. Lysine 300 carries the post-translational modification N6-(pyridoxal phosphate)lysine. Threonine 332 contacts pyridoxal 5'-phosphate.

The protein belongs to the class-III pyridoxal-phosphate-dependent aminotransferase family. Putrescine aminotransferase subfamily. Pyridoxal 5'-phosphate is required as a cofactor.

The catalysed reaction is an alkane-alpha,omega-diamine + 2-oxoglutarate = an omega-aminoaldehyde + L-glutamate. It catalyses the reaction putrescine + 2-oxoglutarate = 1-pyrroline + L-glutamate + H2O. It carries out the reaction cadaverine + 2-oxoglutarate = 5-aminopentanal + L-glutamate. It functions in the pathway amine and polyamine degradation; putrescine degradation; 4-aminobutanal from putrescine (transaminase route): step 1/1. Functionally, catalyzes the aminotransferase reaction from putrescine to 2-oxoglutarate, leading to glutamate and 4-aminobutanal, which spontaneously cyclizes to form 1-pyrroline. This is the first step in one of two pathways for putrescine degradation, where putrescine is converted into 4-aminobutanoate (gamma-aminobutyrate or GABA) via 4-aminobutanal. Also functions as a cadaverine transaminase in a a L-lysine degradation pathway to succinate that proceeds via cadaverine, glutarate and L-2-hydroxyglutarate. The protein is Putrescine aminotransferase of Escherichia coli O81 (strain ED1a).